Reading from the N-terminus, the 176-residue chain is MDSDMQNQNPHTNSKNSSSAGMAVDGHSVTKRLRSELMSLMMSNTPGISAFPDSDSNLLHWAGTITGPSDTYYEGLKFKISMSFPANYPYSPPTIIFTSPMWHPNVDMSGNICLDILKDKWSAVYNVQTILLSLQSLLGEPNNASPLNAQAAELWSKDPIEYKRLLMQRYKEIDEI.

Residues 1–20 (MDSDMQNQNPHTNSKNSSSA) are compositionally biased toward polar residues. Residues 1 to 25 (MDSDMQNQNPHTNSKNSSSAGMAVD) form a disordered region. Residues 28 to 175 (SVTKRLRSEL…LMQRYKEIDE (148 aa)) form the UBC core domain. The active-site Glycyl thioester intermediate is Cys113.

Belongs to the ubiquitin-conjugating enzyme family.

The enzyme catalyses S-ubiquitinyl-[E1 ubiquitin-activating enzyme]-L-cysteine + [E2 ubiquitin-conjugating enzyme]-L-cysteine = [E1 ubiquitin-activating enzyme]-L-cysteine + S-ubiquitinyl-[E2 ubiquitin-conjugating enzyme]-L-cysteine.. Its pathway is protein modification; protein ubiquitination. Catalyzes the covalent attachment of ubiquitin to other proteins. This is Ubiquitin-conjugating enzyme E2-20 kDa (ubc11) from Schizosaccharomyces pombe (strain 972 / ATCC 24843) (Fission yeast).